The following is a 390-amino-acid chain: Leu/Ile/Val-binding protein homolog 6 (390 aa).

The N-terminal stretch at 1-21 (MKKIALTALAVFSLAASAAYA) is a signal peptide.

Belongs to the leucine-binding protein family.

Its function is as follows. Component of an amino-acid transport system. The sequence is that of Leu/Ile/Val-binding protein homolog 6 from Brucella abortus (strain 2308).